The chain runs to 442 residues: Protein translocase subunit SecF (442 aa).

The disordered stretch occupies residues 1 to 39 (MASKAKTGRDDEATSAVELTEATESAVARTDGDSTTDTA). Helical transmembrane passes span 67 to 87 (WFGV…FRGF), 187 to 207 (ITKK…LYIT), 218 to 238 (AITA…LVGF), 243 to 263 (ATVI…VIVF), 301 to 321 (LIGV…LGVG), and 331 to 351 (LIGI…LLVT). The tract at residues 366–442 (VLKRRNSGSP…PTGKRNAGRR (77 aa)) is disordered. Over residues 402-432 (QASSQSAPRAAQGSSKPAPGARPVRPVGTRR) the composition is skewed to low complexity. The span at 433–442 (PTGKRNAGRR) shows a compositional bias: basic residues.

The protein belongs to the SecD/SecF family. SecF subfamily. In terms of assembly, forms a complex with SecD. Part of the essential Sec protein translocation apparatus which comprises SecA, SecYEG and auxiliary proteins SecDF. Other proteins may also be involved.

It localises to the cell membrane. Its function is as follows. Part of the Sec protein translocase complex. Interacts with the SecYEG preprotein conducting channel. SecDF uses the proton motive force (PMF) to complete protein translocation after the ATP-dependent function of SecA. The sequence is that of Protein translocase subunit SecF from Mycobacterium tuberculosis (strain CDC 1551 / Oshkosh).